The primary structure comprises 473 residues: MARTPQEVLKWIQDENIKIIDLKFIDTPGIWQHCSFYYDQLDENSFTEGIPFDGSSIRGWKAINESDMCMVPDPNTATIDPFCKEPTLSMICSIKEPRTGEWYNRDPRTIAAKAVEYLRGTGIADTVYFGPEAEFFLFDDIRFGQTENSSYYFADSVEGRWNTGREEEGGNLGYKPGYKQGYFPVAPTDTAQDIRTEMLLTMAGLCVPIEKHHHEVASGGQNELGIKFDKLVNSADNLMIYKYVIKNVAKKYGKTVTFMPKPIFNDNGSGMHVHQSLWKDGQPLFAGDKYAGFSQMGLWYIGGILKHAPALLAFTNPTTNSYKRLVPGFEAPVNLAYSQGNRSASVRIPLSGGNPKAKRLEFRCPDATSNPYLAFAAMLCAGIDGIKNQIDPGEPLDVDIYDLSPEELAKIPSTPGSLEAALEALEKDHEFLTGTGVFSPDFVESWIEYKLDNEVNPMRLRPHPYEFSLYYDC.

A GS beta-grasp domain is found at 15–100 (ENIKIIDLKF…ICSIKEPRTG (86 aa)). Residues 107–473 (PRTIAAKAVE…PYEFSLYYDC (367 aa)) form the GS catalytic domain. Residue E132 participates in Mn(2+) binding. E134 lines the Mg(2+) pocket. E210 serves as a coordination point for ATP. Mg(2+) is bound by residues E215 and E223. Residues 267–268 (NG) and G268 contribute to the L-glutamate site. Mg(2+) is bound at residue H272. Residues 274–276 (HQS) and S276 contribute to the ATP site. 3 residues coordinate L-glutamate: R324, E330, and R342. 3 residues coordinate ATP: R342, R347, and K356. Residue E361 coordinates Mn(2+). R363 is a binding site for L-glutamate. At Y401 the chain carries O-AMP-tyrosine.

Belongs to the glutamine synthetase family. Oligomer of 12 subunits arranged in the form of two hexagons. The cofactor is Mg(2+).

The protein localises to the cytoplasm. The catalysed reaction is L-glutamate + NH4(+) + ATP = L-glutamine + ADP + phosphate + H(+). Its activity is regulated as follows. Inhibited by ADP (90%), AMP (80%), alanine (52%) and aspartate (41%). The activity of this enzyme could be controlled by adenylation under conditions of abundant glutamine. Functionally, involved in nitrogen metabolism via ammonium assimilation. Catalyzes the ATP-dependent biosynthesis of glutamine from glutamate and ammonia. The protein is Glutamine synthetase of Synechocystis sp. (strain ATCC 27184 / PCC 6803 / Kazusa).